Consider the following 295-residue polypeptide: Autophagy-related protein 37 (295 aa).

The region spanning 5–103 is the ACB domain; it reads VDRVFVHALN…LIDTMHRYAT (99 aa). Disordered regions lie at residues 124–162 and 174–201; these read NSPS…PLKE and LRSQ…RWQR. The span at 125–153 shows a compositional bias: low complexity; it reads SPSSSLSSPRPNQSTGAGAQQPQQEPEQA. N-linked (GlcNAc...) asparagine glycosylation is present at asparagine 136. Residues 244–264 form a helical membrane-spanning segment; the sequence is WLLVKHIFADLVILSVVLLWL.

The protein belongs to the ATG37 family.

Its subcellular location is the peroxisome membrane. In terms of biological role, acyl-CoA binding protein which acts as the peroxisome receptor for pexophagy. Required for both micropexophagy and macropexophagy, but not for the cytoplasm to vacuole transport (Cvt) or autophagy pathways. Required for functional micropexophagic apparatus (MIPA) and relocation of ATG11 to the peroxisome-sequestering arms of the vacuole. Binds palmitoyl-CoA but not oleyl-CoA. The chain is Autophagy-related protein 37 from Gibberella zeae (strain ATCC MYA-4620 / CBS 123657 / FGSC 9075 / NRRL 31084 / PH-1) (Wheat head blight fungus).